A 404-amino-acid chain; its full sequence is Cysteine desulfurase IscS (404 aa).

Pyridoxal 5'-phosphate contacts are provided by residues 75-76, N155, Q183, and 203-205; these read AT and SAH. At K206 the chain carries N6-(pyridoxal phosphate)lysine. T243 lines the pyridoxal 5'-phosphate pocket. The active-site Cysteine persulfide intermediate is C328. [2Fe-2S] cluster is bound at residue C328.

The protein belongs to the class-V pyridoxal-phosphate-dependent aminotransferase family. NifS/IscS subfamily. In terms of assembly, homodimer. Forms a heterotetramer with IscU, interacts with other sulfur acceptors. Pyridoxal 5'-phosphate serves as cofactor.

It is found in the cytoplasm. The enzyme catalyses (sulfur carrier)-H + L-cysteine = (sulfur carrier)-SH + L-alanine. It participates in cofactor biosynthesis; iron-sulfur cluster biosynthesis. Its function is as follows. Master enzyme that delivers sulfur to a number of partners involved in Fe-S cluster assembly, tRNA modification or cofactor biosynthesis. Catalyzes the removal of elemental sulfur atoms from cysteine to produce alanine. Functions as a sulfur delivery protein for Fe-S cluster synthesis onto IscU, an Fe-S scaffold assembly protein, as well as other S acceptor proteins. This is Cysteine desulfurase IscS from Photorhabdus laumondii subsp. laumondii (strain DSM 15139 / CIP 105565 / TT01) (Photorhabdus luminescens subsp. laumondii).